A 218-amino-acid chain; its full sequence is 3,4-dihydroxy-2-butanone 4-phosphate synthase (218 aa).

Residues 38–39 (RE), Asp-43, 151–155 (RRGHT), and Glu-175 contribute to the D-ribulose 5-phosphate site. Glu-39 is a binding site for Mg(2+). His-154 provides a ligand contact to Mg(2+).

The protein belongs to the DHBP synthase family. In terms of assembly, homodimer. Mg(2+) is required as a cofactor. Requires Mn(2+) as cofactor.

The catalysed reaction is D-ribulose 5-phosphate = (2S)-2-hydroxy-3-oxobutyl phosphate + formate + H(+). It participates in cofactor biosynthesis; riboflavin biosynthesis; 2-hydroxy-3-oxobutyl phosphate from D-ribulose 5-phosphate: step 1/1. Functionally, catalyzes the conversion of D-ribulose 5-phosphate to formate and 3,4-dihydroxy-2-butanone 4-phosphate. The sequence is that of 3,4-dihydroxy-2-butanone 4-phosphate synthase from Vibrio cholerae serotype O1 (strain M66-2).